A 435-amino-acid chain; its full sequence is Adenylosuccinate synthetase (435 aa).

GTP-binding positions include 17-23 (GDEGKGK) and 45-47 (GHT). Aspartate 18 functions as the Proton acceptor in the catalytic mechanism. The Mg(2+) site is built by aspartate 18 and glycine 45. Residues 18–21 (DEGK), 43–46 (NAGH), threonine 134, arginine 148, glutamine 229, threonine 244, and arginine 308 contribute to the IMP site. The Proton donor role is filled by histidine 46. 304-310 (SVTGRPR) contributes to the substrate binding site. GTP-binding positions include arginine 310, 336–338 (KLD), and 418–420 (STG).

Belongs to the adenylosuccinate synthetase family. In terms of assembly, homodimer. Requires Mg(2+) as cofactor.

Its subcellular location is the cytoplasm. It carries out the reaction IMP + L-aspartate + GTP = N(6)-(1,2-dicarboxyethyl)-AMP + GDP + phosphate + 2 H(+). It functions in the pathway purine metabolism; AMP biosynthesis via de novo pathway; AMP from IMP: step 1/2. In terms of biological role, plays an important role in the de novo pathway of purine nucleotide biosynthesis. Catalyzes the first committed step in the biosynthesis of AMP from IMP. In Bordetella pertussis (strain Tohama I / ATCC BAA-589 / NCTC 13251), this protein is Adenylosuccinate synthetase.